A 342-amino-acid chain; its full sequence is Anthranilate phosphoribosyltransferase (342 aa).

Residues Gly-80, 83-84 (GD), Thr-88, 90-93 (NIST), 108-116 (KHGNRAVSS), and Ser-120 each bind 5-phospho-alpha-D-ribose 1-diphosphate. Position 80 (Gly-80) interacts with anthranilate. Mg(2+) is bound at residue Ser-92. Asn-111 lines the anthranilate pocket. Arg-166 lines the anthranilate pocket. The Mg(2+) site is built by Asp-225 and Glu-226.

The protein belongs to the anthranilate phosphoribosyltransferase family. Homodimer. The cofactor is Mg(2+).

The catalysed reaction is N-(5-phospho-beta-D-ribosyl)anthranilate + diphosphate = 5-phospho-alpha-D-ribose 1-diphosphate + anthranilate. Its pathway is amino-acid biosynthesis; L-tryptophan biosynthesis; L-tryptophan from chorismate: step 2/5. Functionally, catalyzes the transfer of the phosphoribosyl group of 5-phosphorylribose-1-pyrophosphate (PRPP) to anthranilate to yield N-(5'-phosphoribosyl)-anthranilate (PRA). This is Anthranilate phosphoribosyltransferase from Halalkalibacterium halodurans (strain ATCC BAA-125 / DSM 18197 / FERM 7344 / JCM 9153 / C-125) (Bacillus halodurans).